Consider the following 426-residue polypeptide: Tubby protein homolog 1 (426 aa).

The required for localization to cilia in AWB sensory neurons stretch occupies residues 16-28 (QRKMLEDKQKQKR). The segment at 19 to 39 (MLEDKQKQKRHQSAGSVRTTS) is disordered.

It belongs to the TUB family. In terms of assembly, interacts with rgb-3. In terms of tissue distribution, expressed in ciliated sensory neurons.

Its subcellular location is the cytoplasm. It localises to the cell projection. The protein localises to the axon. The protein resides in the dendrite. It is found in the cilium. In terms of biological role, has a role in fat regulation independent of daf-16. Implicated in ciliar sensory function which is required for normal sensory behavior such as chemotaxis. Required for extension and growth of sensory neuronal cilia during postembryonic development, potentially via mediating signaling protein transport and localization of PI(4,5)P2 to the ciliary base. Functions in life span control via the insulin/IGF-1 pathway. Thought to be involved in neuronal trafficking. This Caenorhabditis elegans protein is Tubby protein homolog 1.